The chain runs to 87 residues: Putative regulatory protein GK1166 (87 aa).

This sequence belongs to the RemA family.

In Geobacillus kaustophilus (strain HTA426), this protein is Putative regulatory protein GK1166.